A 794-amino-acid polypeptide reads, in one-letter code: MNIDDKLEGLFLKCGGIDEMQSSRTMVVMGGVSGQSTVSGELQDSVLQDRSMPHQEILAADEVLQESEMRQQDMISHDELMVHEETVKNDEEQMETHERLPQGLQYALNVPISVKQEITFTDVSEQLMRDKKQIREPVDLQKKKKRKQRSPAKILTINEDGSLGLKTPKSHVCEHCNAAFRTNYHLQRHVFIHTGEKPFQCSQCDMRFIQKYLLQRHEKIHTGEKPFRCDECGMRFIQKYHMERHKRTHSGEKPYQCEYCLQYFSRTDRVLKHKRMCHENHDKKLNRCAIKGGLLTSEEDSGFSTSPKDNSLPKKKRQKTEKKSSGMDKESALDKSDLKKDKNDYLPLYSSSTKVKDGYMVAEYAVEMPHSSVGGSHLEDASGEIHPPKLVLKKINSKRSLKQPLEQNQTISPLTTYEESKVSKYAFELVDKQALLDSEGNADIDQVDNLQEGPSKPVHSSTNYDDAMQFLKKKRYLQAASNNSREYALNVGTIASQPSVTQAAVASVIDESTTASILESQALNVEIKSNHDKNVIPDEVLQTLLDHYSHKANGQHEISFSVADTEVTSSISINSSEVPEVTPSENVGSSSQASSSDKANMLQEYSKFLQQALDRTSQNDAYLNSPSLNFVTDNQTLPNQPAFSSTDKQVYATMPINSFRSGMNSPLRTTPDKSHFGLIVGDSQHSFPFSGDETNHASATSTQDFLDQVTSQKKAEAQPVHQAYQMSSFEQPFRAPYHGSRAGIATQFSTANGQVNLRGPGTSAEFSEFPLVNVNDSRAGMTSSPDATTGQTFG.

Residue Lys6 forms a Glycyl lysine isopeptide (Lys-Gly) (interchain with G-Cter in SUMO2) linkage. A Phosphoserine modification is found at Ser51. Residues Lys88, Lys115, and Lys132 each participate in a glycyl lysine isopeptide (Lys-Gly) (interchain with G-Cter in SUMO2) cross-link. The C2H2-type 1 zinc-finger motif lies at 171-193; that stretch reads HVCEHCNAAFRTNYHLQRHVFIH. At Thr194 the chain carries Phosphothreonine. 2 consecutive C2H2-type zinc fingers follow at residues 199-221 and 227-249; these read FQCS…EKIH and FRCD…KRTH. At Ser250 the chain carries Phosphoserine. Residues 255 to 278 form a C2H2-type 4 zinc finger; it reads YQCEYCLQYFSRTDRVLKHKRMCH. Lys291 participates in a covalent cross-link: Glycyl lysine isopeptide (Lys-Gly) (interchain with G-Cter in SUMO2). Residues 298–336 are disordered; the sequence is EEDSGFSTSPKDNSLPKKKRQKTEKKSSGMDKESALDKS. Ser301 and Ser306 each carry phosphoserine. A Glycyl lysine isopeptide (Lys-Gly) (interchain with G-Cter in SUMO2) cross-link involves residue Lys308. The span at 321–336 shows a compositional bias: basic and acidic residues; it reads EKKSSGMDKESALDKS. Lys356 participates in a covalent cross-link: Glycyl lysine isopeptide (Lys-Gly) (interchain with G-Cter in SUMO1); alternate. A Glycyl lysine isopeptide (Lys-Gly) (interchain with G-Cter in SUMO2); alternate cross-link involves residue Lys356. Lys402 is covalently cross-linked (Glycyl lysine isopeptide (Lys-Gly) (interchain with G-Cter in SUMO2)). Ser412 is modified (phosphoserine). Residues Lys421 and Lys424 each participate in a glycyl lysine isopeptide (Lys-Gly) (interchain with G-Cter in SUMO2) cross-link. Positions 574-588 are enriched in polar residues; it reads NSSEVPEVTPSENVG. A disordered region spans residues 574 to 599; it reads NSSEVPEVTPSENVGSSSQASSSDKA. Lys607 bears the N6-acetyllysine mark. Residues Ser665 and Ser784 each carry the phosphoserine modification.

This sequence belongs to the krueppel C2H2-type zinc-finger protein family. In terms of assembly, interacts with HNRNPDL. Interacts with the 5FMC complex; the interaction requires association with CHTOP. Interacts with CAVIN1. In terms of processing, sumoylated with SUMO2. Desumoylated by SENP3, resulting in the stimulation of transcription of its target genes.

The protein resides in the nucleus. Its function is as follows. Involved in transcriptional regulation. Represses the transcription of a number of genes including gastrin, stromelysin and enolase. Binds to the G-rich box in the enhancer region of these genes. The protein is Zinc finger protein 148 (ZNF148) of Pongo abelii (Sumatran orangutan).